Here is a 404-residue protein sequence, read N- to C-terminus: MALRTIDSLGDLRGRRVIVRCDLNVPLKDGVIGDDGRIRASLGTLTGLREAGARVVVISHLGRPDGTPDDKYSLRPVAARLGELLGADVAFASDTVGDSARAAVEALGDGDVVVLENLRFHAEETSKDETVRRGFAESLAELGDVFVSDGFGVVHRKQASVFELASALPSAAGSLIASELEVLDRLTENPERPYTVVLGGSKVSDKLGVIGHLLPRVDSLLIGGGMLFTFLKAQGHEVGASLLEEDQVETVKGYLAEAEERGVKIVLPTDVVVADGFSADAAHEVTRADAIEGTPAGAKGLGLDIGPETADAFATIIRGSTTVFWNGPMGVFELEPFAAGTKTVADALTRVEGLSVVGGGDSAAAVRALGFDDDRFGHISTGGGASLEFLEGKRLPGLEVLGWQ.

Substrate contacts are provided by residues 22 to 24 (DLN), R37, 60 to 63 (HLGR), R119, and R156. ATP contacts are provided by residues K206, G302, E333, and 359 to 362 (GGDS).

It belongs to the phosphoglycerate kinase family. Monomer.

It localises to the cytoplasm. The catalysed reaction is (2R)-3-phosphoglycerate + ATP = (2R)-3-phospho-glyceroyl phosphate + ADP. It functions in the pathway carbohydrate degradation; glycolysis; pyruvate from D-glyceraldehyde 3-phosphate: step 2/5. This chain is Phosphoglycerate kinase, found in Clavibacter michiganensis subsp. michiganensis (strain NCPPB 382).